Here is an 86-residue protein sequence, read N- to C-terminus: Testis-expressed protein 54 (86 aa).

Residues 1–34 (MGCCQDKNRWASDEQARDEVTEDGREGNEVDNSG) show a composition bias toward basic and acidic residues. Disordered stretches follow at residues 1–43 (MGCC…SNES) and 57–86 (SRRE…PEKG).

As to expression, expressed in Testis.

The chain is Testis-expressed protein 54 from Mus musculus (Mouse).